The sequence spans 365 residues: Caffeic acid 3-O-methyltransferase (365 aa).

Substrate is bound at residue 130 to 136 (MNQDKVL). The segment at 162-180 (AFEYHGTDPRFNKVFNRGM) is substrate binding. S-adenosyl-L-methionine is bound by residues Gly-208, Asp-231, Asp-251, Met-252, and Lys-265. Residue His-269 is the Proton acceptor of the active site.

Belongs to the class I-like SAM-binding methyltransferase superfamily. Cation-independent O-methyltransferase family. COMT subfamily. In terms of assembly, homodimer.

It carries out the reaction (E)-caffeate + S-adenosyl-L-methionine = (E)-ferulate + S-adenosyl-L-homocysteine + H(+). It functions in the pathway aromatic compound metabolism; phenylpropanoid biosynthesis. Catalyzes the conversion of caffeic acid to ferulic acid and of 5-hydroxyferulic acid to sinapic acid. The resulting products may subsequently be converted to the corresponding alcohols that are incorporated into lignins. The protein is Caffeic acid 3-O-methyltransferase (COMT1) of Prunus dulcis (Almond).